The following is a 921-amino-acid chain: Leucine--tRNA ligase (921 aa).

Positions 80 to 90 match the 'HIGH' region motif; sequence PYPSGKLHMGH. Residues 667 to 671 carry the 'KMSKS' region motif; that stretch reads KMSKS. K670 is an ATP binding site.

It belongs to the class-I aminoacyl-tRNA synthetase family.

It localises to the cytoplasm. The enzyme catalyses tRNA(Leu) + L-leucine + ATP = L-leucyl-tRNA(Leu) + AMP + diphosphate. The chain is Leucine--tRNA ligase from Psychrobacter arcticus (strain DSM 17307 / VKM B-2377 / 273-4).